A 265-amino-acid polypeptide reads, in one-letter code: Glycine/sarcosine N-methyltransferase (265 aa).

S-adenosyl-L-methionine contacts are provided by residues Tyr-28, Trp-36, Arg-45, Ala-69, Asp-90, Asp-116–Trp-117, and Leu-134. The substrate site is built by Asn-136, Arg-169, and Tyr-208.

It belongs to the class I-like SAM-binding methyltransferase superfamily. Glycine N-methyltransferase family. In terms of assembly, monomer.

It carries out the reaction glycine + 2 S-adenosyl-L-methionine = N,N-dimethylglycine + 2 S-adenosyl-L-homocysteine + 2 H(+). It catalyses the reaction glycine + S-adenosyl-L-methionine = sarcosine + S-adenosyl-L-homocysteine + H(+). The catalysed reaction is sarcosine + S-adenosyl-L-methionine = N,N-dimethylglycine + S-adenosyl-L-homocysteine + H(+). It functions in the pathway amine and polyamine biosynthesis; betaine biosynthesis via glycine pathway; betaine from glycine: step 1/3. The protein operates within amine and polyamine biosynthesis; betaine biosynthesis via glycine pathway; betaine from glycine: step 2/3. Inhibited by acetate, dimethylglycine and S-adenosyl-L-homocysteine. In terms of biological role, catalyzes the methylation of glycine and sarcosine to sarcosine and dimethylglycine, respectively, with S-adenosylmethionine (AdoMet) acting as the methyl donor. The chain is Glycine/sarcosine N-methyltransferase from Aphanothece halophytica.